The following is a 91-amino-acid chain: Mercuric transport protein periplasmic component (91 aa).

The N-terminal stretch at Met-1–Ala-19 is a signal peptide. The HMA domain maps to Gln-22–Ser-88. Positions 33 and 36 each coordinate Hg(2+).

The protein belongs to the MerP family. Monomer.

It localises to the periplasm. Involved in mercury resistance. Acts as a mercury scavenger that specifically binds to a mercuric ion in the periplasm and probably passes it to the cytoplasmic mercuric reductase MerA via the mercuric transport protein MerT. The polypeptide is Mercuric transport protein periplasmic component (Pseudomonas fluorescens).